A 227-amino-acid chain; its full sequence is ATP-dependent dethiobiotin synthetase BioD (227 aa).

13 to 18 (DIGKTY) contacts ATP. Thr-17 contributes to the Mg(2+) binding site. The active site involves Lys-38. Ser-42 lines the substrate pocket. ATP is bound by residues Asp-55, 116–119 (EGSG), and 179–180 (NN). The Mg(2+) site is built by Asp-55 and Glu-116.

The protein belongs to the dethiobiotin synthetase family. Homodimer. Requires Mg(2+) as cofactor.

It is found in the cytoplasm. The enzyme catalyses (7R,8S)-7,8-diammoniononanoate + CO2 + ATP = (4R,5S)-dethiobiotin + ADP + phosphate + 3 H(+). It participates in cofactor biosynthesis; biotin biosynthesis; biotin from 7,8-diaminononanoate: step 1/2. Catalyzes a mechanistically unusual reaction, the ATP-dependent insertion of CO2 between the N7 and N8 nitrogen atoms of 7,8-diaminopelargonic acid (DAPA, also called 7,8-diammoniononanoate) to form a ureido ring. The polypeptide is ATP-dependent dethiobiotin synthetase BioD (Clostridium botulinum (strain ATCC 19397 / Type A)).